The following is a 184-amino-acid chain: Probable RNA 2'-phosphotransferase (184 aa).

The protein belongs to the KptA/TPT1 family.

Removes the 2'-phosphate from RNA via an intermediate in which the phosphate is ADP-ribosylated by NAD followed by a presumed transesterification to release the RNA and generate ADP-ribose 1''-2''-cyclic phosphate (APPR&gt;P). May function as an ADP-ribosylase. This chain is Probable RNA 2'-phosphotransferase, found in Rhizobium johnstonii (strain DSM 114642 / LMG 32736 / 3841) (Rhizobium leguminosarum bv. viciae).